The sequence spans 541 residues: MAAKLIAFDEEARRGLERGMNQLADAVKVTLGPKGRNVVLEKKWGAPTITNDGVSIAKEIELEDPYEKIGAELVKEVAKKTDDVAGDGTTTATVLAQALVREGLRNVAAGANPIGLKRGIDAAVARISEELANLSKEVETKEQIASTASISAGDPQIGEYIAEAMDKVGKEGVITVEEGQTFGLELELAEGMRFDKGYISPYFATDLERMETVLEDPYILIANQKISNNNEFLPVIEKVLQAGRPLVVIAEDVEGTALQTLVVNKIRGTFKSVAIKAPGFGDRRKAMLQDIAILTGGQVITEEVGLKLENTELDMLGRARKVVVTKDETTIVDGAGDASAIAGRVNEIRAEIERTDSDYDREKLQERLARLAGGVAVIKAGAATEVELKERKHRIEDAVRNAKAAVEEGILPGGGVALLQASIAAFEKLELEGDEAIGASIVRRAVEEPLKQIAINAGYEGGVVVEKVKSLEPGIGLNAATGEYTDLFKDGVIDPTKVTRSALQNAASIAGLFLTTEAVIAEKPEKPAANNAGGDMGGMDF.

ATP contacts are provided by residues 30–33, 87–91, Gly414, 478–480, and Asp494; these read TLGP, DGTTT, and NAA.

The protein belongs to the chaperonin (HSP60) family. Forms a cylinder of 14 subunits composed of two heptameric rings stacked back-to-back. Interacts with the co-chaperonin GroES.

Its subcellular location is the cytoplasm. It catalyses the reaction ATP + H2O + a folded polypeptide = ADP + phosphate + an unfolded polypeptide.. Functionally, together with its co-chaperonin GroES, plays an essential role in assisting protein folding. The GroEL-GroES system forms a nano-cage that allows encapsulation of the non-native substrate proteins and provides a physical environment optimized to promote and accelerate protein folding. This is Chaperonin GroEL 1 from Thermobifida fusca (strain YX).